Reading from the N-terminus, the 428-residue chain is Citrate synthase (428 aa).

Residues His265, His306, and Asp363 contribute to the active site.

Belongs to the citrate synthase family. As to quaternary structure, homohexamer.

The enzyme catalyses oxaloacetate + acetyl-CoA + H2O = citrate + CoA + H(+). The protein operates within carbohydrate metabolism; tricarboxylic acid cycle; isocitrate from oxaloacetate: step 1/2. Its activity is regulated as follows. Allosterically inhibited by NADH. This is Citrate synthase (gltA) from Pseudomonas aeruginosa (strain ATCC 15692 / DSM 22644 / CIP 104116 / JCM 14847 / LMG 12228 / 1C / PRS 101 / PAO1).